A 423-amino-acid chain; its full sequence is Pseudouridylate synthase 1 homolog (423 aa).

The disordered stretch occupies residues 32–75 (AGNKVPPALASHQPDRKGRGGWVWEETEHPAKRVKGGEDEEPPR). Residues 57–68 (ETEHPAKRVKGG) show a composition bias toward basic and acidic residues. D142 acts as the Nucleophile in catalysis. The segment at 403 to 423 (ADTGAKVPSSLEGSEGDGDTD) is disordered. A phosphoserine mark is found at S411 and S416. T422 bears the Phosphothreonine mark.

The protein belongs to the tRNA pseudouridine synthase TruA family. Monomer. Forms a complex with RARG and the SRA1 RNA in the nucleus.

Its subcellular location is the nucleus. The protein resides in the cytoplasm. It is found in the mitochondrion. It catalyses the reaction a uridine in tRNA = a pseudouridine in tRNA. The catalysed reaction is uridine(38/39/40) in tRNA = pseudouridine(38/39/40) in tRNA. It carries out the reaction a uridine in mRNA = a pseudouridine in mRNA. In terms of biological role, pseudouridylate synthase that catalyzes pseudouridylation of tRNAs and mRNAs. Acts on positions 27/28 in the anticodon stem and also positions 34 and 36 in the anticodon of an intron containing tRNA. Also catalyzes pseudouridylation of mRNAs: mediates pseudouridylation of mRNAs with the consensus sequence 5'-UGUAG-3'. Acts as a regulator of pre-mRNA splicing by mediating pseudouridylation of pre-mRNAs at locations associated with alternatively spliced regions. Pseudouridylation of pre-mRNAs near splice sites directly regulates mRNA splicing and mRNA 3'-end processing. Involved in regulation of nuclear receptor activity through pseudouridylation of SRA1 mRNA. Functionally, does not form pseudouridine when expressed in vitro. This chain is Pseudouridylate synthase 1 homolog, found in Mus musculus (Mouse).